The primary structure comprises 60 residues: Small ribosomal subunit protein eS31 (60 aa).

Zn(2+) is bound by residues Cys-32, Cys-35, Cys-50, and Cys-53. The C4-type zinc finger occupies 32 to 53 (CPRCGAGVFMGEHKDRFSCGKC).

It belongs to the eukaryotic ribosomal protein eS31 family. As to quaternary structure, part of the 30S ribosomal subunit. Zn(2+) serves as cofactor.

The chain is Small ribosomal subunit protein eS31 from Methanocorpusculum labreanum (strain ATCC 43576 / DSM 4855 / Z).